The following is a 101-amino-acid chain: Small ribosomal subunit protein uS14 (101 aa).

Belongs to the universal ribosomal protein uS14 family. In terms of assembly, part of the 30S ribosomal subunit. Contacts proteins S3 and S10.

Functionally, binds 16S rRNA, required for the assembly of 30S particles and may also be responsible for determining the conformation of the 16S rRNA at the A site. This is Small ribosomal subunit protein uS14 from Paenarthrobacter aurescens (strain TC1).